Reading from the N-terminus, the 272-residue chain is NADPH-dependent 7-cyano-7-deazaguanine reductase (272 aa).

82–84 (IES) is a binding site for substrate. An NADPH-binding site is contributed by 84-85 (SK). Cys178 functions as the Thioimide intermediate in the catalytic mechanism. The active-site Proton donor is Asp185. Position 217–218 (217–218 (HE)) interacts with substrate. 246-247 (RG) is a binding site for NADPH.

The protein belongs to the GTP cyclohydrolase I family. QueF type 2 subfamily. In terms of assembly, homodimer.

The protein localises to the cytoplasm. It carries out the reaction 7-aminomethyl-7-carbaguanine + 2 NADP(+) = 7-cyano-7-deazaguanine + 2 NADPH + 3 H(+). It functions in the pathway tRNA modification; tRNA-queuosine biosynthesis. Catalyzes the NADPH-dependent reduction of 7-cyano-7-deazaguanine (preQ0) to 7-aminomethyl-7-deazaguanine (preQ1). This Stenotrophomonas maltophilia (strain R551-3) protein is NADPH-dependent 7-cyano-7-deazaguanine reductase.